Here is a 419-residue protein sequence, read N- to C-terminus: Ubiquitin receptor RAD23c (419 aa).

The 79-residue stretch at 1–79 (MKIFVKTLKG…IVIMMNKSKP (79 aa)) folds into the Ubiquitin-like domain. The segment covering 83-118 (AASSASAGTSQAKSIPPSTSQPSISPQTPASVSAPV) has biased composition (low complexity). The interval 83–172 (AASSASAGTS…DSAPVGSQGD (90 aa)) is disordered. A compositionally biased stretch (pro residues) spans 119–135 (APAPTRPPPPAPTPTPA). Positions 136-146 (PVAATETVTTP) are enriched in low complexity. In terms of domain architecture, UBA 1 spans 185-228 (SNLESTIQQILDMGGGTWDRETVVLALRAAFNNPERAVEYLYTG). Residues 235–282 (VPPVARPPASAGQPANPPAQTQQPAAAPASGPNANPLDLFPQGLPNVG) are disordered. Residues 245 to 270 (AGQPANPPAQTQQPAAAPASGPNANP) show a composition bias toward low complexity. The region spanning 288 to 331 (GTLDFLRNSQQFQALRAMVQANPQVLQPMLQELGKQNPNLMRLI) is the STI1 domain. Positions 372–413 (THEEREAIERLEAMGFERALVLEVFFACNKNEELAANYLLDH) constitute a UBA 2 domain.

The protein belongs to the RAD23 family. Interacts with 'Lys-48'-linked polyubiquitin chains via its both UBA domains. Interacts with RPN10 via its ubiquitin-like domain. In terms of tissue distribution, widely expressed in the whole plant.

The protein localises to the nucleus. The protein resides in the cytoplasm. Functionally, may be involved in nucleotide excision repair. Binds and presumably selects ubiquitin-conjugates for destruction. Prefers multiubiquitin chains rather than single ubiquitins, with a binding affinity for 'Lys-48'-linked ubiquitin chains. Acts as a ubiquitin receptor that associates with the 26S proteasomal docking subunit RPN10 for the indirect recognition of ubiquitinated substrates of ubiquitin/26S proteasome-mediated proteolysis (UPP). Involved in UV tolerance in hypocotyls, specifically in dark conditions. The polypeptide is Ubiquitin receptor RAD23c (Arabidopsis thaliana (Mouse-ear cress)).